The chain runs to 199 residues: Fe/S biogenesis protein NfuA (199 aa).

Cys-156 and Cys-159 together coordinate [4Fe-4S] cluster.

This sequence belongs to the NfuA family. In terms of assembly, homodimer. Requires [4Fe-4S] cluster as cofactor.

Its function is as follows. Involved in iron-sulfur cluster biogenesis. Binds a 4Fe-4S cluster, can transfer this cluster to apoproteins, and thereby intervenes in the maturation of Fe/S proteins. Could also act as a scaffold/chaperone for damaged Fe/S proteins. The polypeptide is Fe/S biogenesis protein NfuA (Actinobacillus pleuropneumoniae serotype 5b (strain L20)).